Reading from the N-terminus, the 508-residue chain is Pyruvate kinase 2 (508 aa).

R50 contributes to the substrate binding site. N52, S54, D85, and T86 together coordinate K(+). 52–55 (NFSH) contributes to the ATP binding site. Residues R92 and K178 each coordinate ATP. A Mg(2+)-binding site is contributed by E243. The substrate site is built by G266, D267, and T299. D267 contacts Mg(2+).

It belongs to the pyruvate kinase family. As to quaternary structure, homotetramer. Requires Mg(2+) as cofactor. K(+) is required as a cofactor.

The enzyme catalyses pyruvate + ATP = phosphoenolpyruvate + ADP + H(+). Its pathway is carbohydrate degradation; glycolysis; pyruvate from D-glyceraldehyde 3-phosphate: step 5/5. This chain is Pyruvate kinase 2 (PYK2), found in Candida glabrata (strain ATCC 2001 / BCRC 20586 / JCM 3761 / NBRC 0622 / NRRL Y-65 / CBS 138) (Yeast).